The sequence spans 480 residues: UDP-N-acetylmuramate--L-alanine ligase (480 aa).

Glycine 125 to threonine 131 lines the ATP pocket.

The protein belongs to the MurCDEF family.

The protein localises to the cytoplasm. The catalysed reaction is UDP-N-acetyl-alpha-D-muramate + L-alanine + ATP = UDP-N-acetyl-alpha-D-muramoyl-L-alanine + ADP + phosphate + H(+). Its pathway is cell wall biogenesis; peptidoglycan biosynthesis. In terms of biological role, cell wall formation. The sequence is that of UDP-N-acetylmuramate--L-alanine ligase from Ectopseudomonas mendocina (strain ymp) (Pseudomonas mendocina).